The following is a 403-amino-acid chain: SAIPRGLLLLAGLCCLVFGIMAEDAQVAQGPSQQIPRSLAHFAHSMYRVLTQQSNTSNIFFSPVSIATALAMVSLGAKGDTHTQILWGLEFNLTEIAEADIHDGFQNLLHTLNRPHSEHELTTGNGLFLDQKLKLKEKFSEDVKTLYHAEAFPTNFSNPKEAEKQINAYVEKGTQGKIVDLVKDLSADTVLALVNYIFFRGKWEKPFDVKHTTQEDFLVDMNTTVNVPMMKRQGMYKAFHCSTIQSWVLLLDYEGNVTTLFLLPDKGKMQHLEETLTPELIFKFARKTERMFANVHLPKLSISGTYDLKEVLGHLGITNVFSGAADLSGITEDMPLKISKGLHKALLTIDEKGTEAAGATELEITPHSVPQDLFFNKPFLFLIIDHSTDTPLFVGKVMDPTKK.

The first 22 residues, 1 to 22 (SAIPRGLLLLAGLCCLVFGIMA), serve as a signal peptide directing secretion. Residues Asn55, Asn92, Asn155, Asn222, and Asn256 are each glycosylated (N-linked (GlcNAc...) asparagine). The RCL stretch occupies residues 358–377 (GATELEITPHSVPQDLFFNK).

This sequence belongs to the serpin family.

The protein resides in the secreted. Its function is as follows. Inhibits elastase, chymotrypsin, cathepsin G, plasmin, and trypsin. This Cavia porcellus (Guinea pig) protein is Alpha-1-antiproteinase F.